Here is a 959-residue protein sequence, read N- to C-terminus: Glycine dehydrogenase (decarboxylating) (959 aa).

At Lys-708 the chain carries N6-(pyridoxal phosphate)lysine.

This sequence belongs to the GcvP family. As to quaternary structure, the glycine cleavage system is composed of four proteins: P, T, L and H. Pyridoxal 5'-phosphate is required as a cofactor.

The enzyme catalyses N(6)-[(R)-lipoyl]-L-lysyl-[glycine-cleavage complex H protein] + glycine + H(+) = N(6)-[(R)-S(8)-aminomethyldihydrolipoyl]-L-lysyl-[glycine-cleavage complex H protein] + CO2. In terms of biological role, the glycine cleavage system catalyzes the degradation of glycine. The P protein binds the alpha-amino group of glycine through its pyridoxal phosphate cofactor; CO(2) is released and the remaining methylamine moiety is then transferred to the lipoamide cofactor of the H protein. This chain is Glycine dehydrogenase (decarboxylating), found in Yersinia enterocolitica serotype O:8 / biotype 1B (strain NCTC 13174 / 8081).